The sequence spans 77 residues: Translational regulator CsrA (77 aa).

Belongs to the CsrA/RsmA family. In terms of assembly, homodimer; the beta-strands of each monomer intercalate to form a hydrophobic core, while the alpha-helices form wings that extend away from the core.

It is found in the cytoplasm. Functionally, a translational regulator that binds mRNA to regulate translation initiation and/or mRNA stability. Usually binds in the 5'-UTR at or near the Shine-Dalgarno sequence preventing ribosome-binding, thus repressing translation. Its main target seems to be the major flagellin gene, while its function is anatagonized by FliW. This Pseudarthrobacter chlorophenolicus (strain ATCC 700700 / DSM 12829 / CIP 107037 / JCM 12360 / KCTC 9906 / NCIMB 13794 / A6) (Arthrobacter chlorophenolicus) protein is Translational regulator CsrA.